Reading from the N-terminus, the 101-residue chain is Citrate lyase acyl carrier protein (101 aa).

O-(phosphoribosyl dephospho-coenzyme A)serine is present on S14.

The protein belongs to the CitD family. As to quaternary structure, oligomer with a subunit composition of (alpha,beta,gamma)6.

It localises to the cytoplasm. Functionally, covalent carrier of the coenzyme of citrate lyase. In Latilactobacillus sakei subsp. sakei (strain 23K) (Lactobacillus sakei subsp. sakei), this protein is Citrate lyase acyl carrier protein.